A 656-amino-acid polypeptide reads, in one-letter code: Anion exchange transporter (656 aa).

Residues 1–75 (MTGAKRKKRS…LSFAMLSSVH (75 aa)) are Cytoplasmic-facing. Residues 76–96 (PVFGLYGSLFPAIIYAIFGMG) form a helical membrane-spanning segment. At 97–144 (RHVATGTFALTSLISANAVERLVPQSSRNLTTQSNSSVLGLSEFELQR) the chain is on the extracellular side. The helical transmembrane segment at 145 to 165 (IGVAAAVSFLGGVIQLVMFVL) threads the bilayer. Residue Q166 is a topological domain, cytoplasmic. A helical membrane pass occupies residues 167-187 (LGSATFLLTEPVISAMTTGAA). Residues 188–199 (THVVTSQVKYLL) are Extracellular-facing. Residues 200-220 (GIKMPYISGPLGFFYIYAYVF) form a helical membrane-spanning segment. Residues 221–222 (EN) are Cytoplasmic-facing. Residues 223-243 (IKSVQLEALLFSLLSIIVLVL) traverse the membrane as a helical segment. Over 244 to 254 (VKELNEQFKRK) the chain is Extracellular. The chain crosses the membrane as a helical span at residues 255 to 275 (IKVVLPVDLVLIIAASFACYC). Residues 276–306 (TNMENTYGLEVVGHIPNGIPPPRAPPMNILS) are Cytoplasmic-facing. Residues 307–327 (AVLTEAFGVALVGYVASLALA) traverse the membrane as a helical segment. Topologically, residues 328 to 343 (QGSAKKFKYSVDDNQE) are extracellular. A helical membrane pass occupies residues 344-364 (FLAHGLSNVIPSFLFCIPSAA). Topologically, residues 365 to 383 (AMGRTAGLYSTGAKTQVAC) are cytoplasmic. Transmembrane regions (helical) follow at residues 384–404 (LISC…LYWL) and 405–425 (PMCV…IQFR). Residues 426 to 448 (DLKKYWNVDKIDWGIWISTYIFT) lie on the Extracellular side of the membrane. Residues 449-469 (ICFAANVGLLFGVICTIAIVL) traverse the membrane as a helical segment. Over 470–656 (GRFPRAKTLS…LSKASDHSEV (187 aa)) the chain is Cytoplasmic. Residues 492–641 (TEMHDETSQQ…DSVPAAISII (150 aa)) form the STAS domain. A membrane targeting region spans residues 641-656 (IQSNKNLSKASDHSEV).

It belongs to the SLC26A/SulP transporter (TC 2.A.53) family. In terms of tissue distribution, expressed in the Reissner's membrane epithelial cells in the cochlea (at protein level). Expressed in the retinal pigment epithelium (at protein level). Abundantly expressed in parietal cells on the glandular portion of the stomach. Lower levels are observed in the kidney, with expression in the proximal tubule and thick ascending limb of the loop of Henle. Also expressed in distal segments of nephron, in extraglomerular mesagial cells and a subpopulation of intercalated cells of outer medullary collecting ducts. Expressed in the thyroid gland.

It localises to the basolateral cell membrane. It is found in the recycling endosome membrane. The protein resides in the apical cell membrane. The protein localises to the lateral cell membrane. The enzyme catalyses chloride(in) = chloride(out). The catalysed reaction is iodide(out) = iodide(in). It catalyses the reaction bromide(in) = bromide(out). It carries out the reaction oxalate(in) = oxalate(out). The enzyme catalyses nitrate(in) = nitrate(out). The catalysed reaction is sulfate(in) = sulfate(out). It catalyses the reaction hydrogencarbonate(in) = hydrogencarbonate(out). It carries out the reaction D-gluconate(in) = D-gluconate(out). The enzyme catalyses thiocyanate(in) = thiocyanate(out). The catalysed reaction is hydrogencarbonate(in) + chloride(out) = hydrogencarbonate(out) + chloride(in). With respect to regulation, regulated by pH. Activity inhibited by all inhibitors of several anion channels and transporters, including 4,4'-Di-isothiocyanatostilbene-2,2'-disulfonic acid (DIDS), diphenylamine-2-carboxylic acid, glybenclamide and 5-Nitro-2-(3-phenylpropyl-amino)benzoic acid. In terms of biological role, acts as an anion channel mediating the transport of chloride, bromide, iodide, nitrate, sulfate, gluconate, thiocyanate and bicarbonate ions. Its permeability towards bicarbonate is weak and increases when pH is above 7. Mediates oxalate transport. Mediates thiocyanate transport in retinal pigment epithelium cells. Mediates iodide transport in the thyroid gland, playing an important role in the synthesis of thyroid hormones and the maintenance of thyroid function. Although it is an anion channel, according to PubMed:12736153 and PubMed:19723628 it has been shown to exhibit chloride-bicarbonate exchanger activity. The polypeptide is Anion exchange transporter (Mus musculus (Mouse)).